We begin with the raw amino-acid sequence, 52 residues long: ATP synthase protein 8 (52 aa).

The helical transmembrane segment at 7 to 27 (MKWFLIYFIYLLIFYLFIMLI) threads the bilayer.

It belongs to the ATPase protein 8 family. In terms of assembly, F-type ATPases have 2 components, CF(1) - the catalytic core - and CF(0) - the membrane proton channel.

It is found in the mitochondrion membrane. In terms of biological role, mitochondrial membrane ATP synthase (F(1)F(0) ATP synthase or Complex V) produces ATP from ADP in the presence of a proton gradient across the membrane which is generated by electron transport complexes of the respiratory chain. F-type ATPases consist of two structural domains, F(1) - containing the extramembraneous catalytic core and F(0) - containing the membrane proton channel, linked together by a central stalk and a peripheral stalk. During catalysis, ATP synthesis in the catalytic domain of F(1) is coupled via a rotary mechanism of the central stalk subunits to proton translocation. Part of the complex F(0) domain. Minor subunit located with subunit a in the membrane. The protein is ATP synthase protein 8 (mt:ATPase8) of Apis mellifera ligustica (Common honeybee).